The chain runs to 257 residues: tRNA-cytidine(32) 2-sulfurtransferase (257 aa).

A PP-loop motif motif is present at residues 37–42 (SGGKDS). Residues C112, C115, and C202 each coordinate [4Fe-4S] cluster.

It belongs to the TtcA family. As to quaternary structure, homodimer. Mg(2+) serves as cofactor. The cofactor is [4Fe-4S] cluster.

It localises to the cytoplasm. It catalyses the reaction cytidine(32) in tRNA + S-sulfanyl-L-cysteinyl-[cysteine desulfurase] + AH2 + ATP = 2-thiocytidine(32) in tRNA + L-cysteinyl-[cysteine desulfurase] + A + AMP + diphosphate + H(+). Its pathway is tRNA modification. Catalyzes the ATP-dependent 2-thiolation of cytidine in position 32 of tRNA, to form 2-thiocytidine (s(2)C32). The sulfur atoms are provided by the cysteine/cysteine desulfurase (IscS) system. In Geobacter sulfurreducens (strain ATCC 51573 / DSM 12127 / PCA), this protein is tRNA-cytidine(32) 2-sulfurtransferase.